A 319-amino-acid chain; its full sequence is 1-aminocyclopropane-1-carboxylate oxidase 4 (319 aa).

The Fe2OG dioxygenase domain maps to 153 to 253 (PNFGTKVSNY…RMSLASFYNP (101 aa)). His177, Asp179, and His234 together coordinate Fe cation.

Belongs to the iron/ascorbate-dependent oxidoreductase family. Fe cation is required as a cofactor.

It catalyses the reaction 1-aminocyclopropane-1-carboxylate + L-ascorbate + O2 = ethene + L-dehydroascorbate + hydrogen cyanide + CO2 + 2 H2O. The protein operates within alkene biosynthesis; ethylene biosynthesis via S-adenosyl-L-methionine; ethylene from S-adenosyl-L-methionine: step 2/2. The sequence is that of 1-aminocyclopropane-1-carboxylate oxidase 4 (ACO4) from Petunia hybrida (Petunia).